A 1069-amino-acid polypeptide reads, in one-letter code: Thyrotropin-releasing hormone-degrading ectoenzyme (1069 aa).

Residues 1–11 (MALDGELGEQE) show a composition bias toward acidic residues. The tract at residues 1 to 46 (MALDGELGEQEEEKKKKKKKKRKKKKEEEEEEEGAEKSSSPFAAAM) is disordered. At 1–85 (MALDGELGEQ…ERHIAVHKRL (85 aa)) the chain is on the cytoplasmic side. Residues 15–25 (KKKKKKKRKKK) show a composition bias toward basic residues. A helical; Signal-anchor for type II membrane protein transmembrane segment spans residues 86-106 (VLAFAVSLVALLAVTMLAVLL). At 107-1069 (SLRFDECGAS…FQWLGKALRH (963 aa)) the chain is on the extracellular side. Positions 117–179 (ATPGADGGPS…PSEEEREPWE (63 aa)) are disordered. The span at 121–136 (ADGGPSGFPERGGNGS) shows a compositional bias: gly residues. Asn-134, Asn-205, Asn-220, Asn-267, and Asn-383 each carry an N-linked (GlcNAc...) asparagine glycan. 449-453 (AAMEN) serves as a coordination point for substrate. His-485 is a binding site for Zn(2+). Glu-486 serves as the catalytic Proton acceptor. The Zn(2+) site is built by His-489 and Glu-508. Residues Asn-650, Asn-679, Asn-694, Asn-708, Asn-729, Asn-845, and Asn-951 are each glycosylated (N-linked (GlcNAc...) asparagine).

Belongs to the peptidase M1 family. In terms of assembly, homodimer; disulfide-linked. The cofactor is Zn(2+). In terms of tissue distribution, predominantly expressed in brain.

Its subcellular location is the membrane. It carries out the reaction Release of the N-terminal pyroglutamyl group from pGlu-|-His-Xaa tripeptides and pGlu-|-His-Xaa-Gly tetrapeptides.. In terms of biological role, specific inactivation of TRH after its release. This chain is Thyrotropin-releasing hormone-degrading ectoenzyme (TRHDE), found in Homo sapiens (Human).